The chain runs to 232 residues: MDAVAAEPVSSSMAGLPAQLRDLGQQDYAPVWRAMQRFTDAREEYTADEIWVVEHAPVFTLGQAGKPEHVLAPGEIPVLQVDRGGQVTYHGPGQLVVYPLLDLRRLKIGVRDYVCKIEQALIDTLDEWNIVAERRDGAPGVYVGGAKIAALGIRVRRGCTFHGLSFNVAMDLQPFHRINPCGYQGLQVTSVLDLGGPSGMDAVKAVLLDQLARQFGLVLQPTSALPDLSLPA.

The region spanning 44–219 (EYTADEIWVV…QLARQFGLVL (176 aa)) is the BPL/LPL catalytic domain. Substrate is bound by residues 83–90 (RGGQVTYH), 150–152 (ALG), and 163–165 (GLS). Catalysis depends on Cys-181, which acts as the Acyl-thioester intermediate.

This sequence belongs to the LipB family.

The protein localises to the cytoplasm. It carries out the reaction octanoyl-[ACP] + L-lysyl-[protein] = N(6)-octanoyl-L-lysyl-[protein] + holo-[ACP] + H(+). It participates in protein modification; protein lipoylation via endogenous pathway; protein N(6)-(lipoyl)lysine from octanoyl-[acyl-carrier-protein]: step 1/2. Catalyzes the transfer of endogenously produced octanoic acid from octanoyl-acyl-carrier-protein onto the lipoyl domains of lipoate-dependent enzymes. Lipoyl-ACP can also act as a substrate although octanoyl-ACP is likely to be the physiological substrate. The protein is Octanoyltransferase of Xanthomonas axonopodis pv. citri (strain 306).